Reading from the N-terminus, the 375-residue chain is MAGNKKQVKKNTKPIVVDIDDKPLLDTSNLDTAVQTSASTKKDGKKVTATTTTTTPTPTPTPTPTPTTTTTTEKKSKEIEIVPTPSNVPASISASTSNVVIAPAVEAQITDDFSVVPEKNKNKKKINSTATDGTTTTTNIPKPTPVRAPITKKGNTAPRSQFHLLALDEDDITFDETHSHKEEPKQPQQQHSTKKSSSKQQATQNVSSSSSSKKSKSKETKKVEPTPTTTTQRTTTTKSTPTPTPTPTPAATKVVEQPKEKSSPAPVKKEKEIKQNKKESEGFLFSLMESLITPGVPSVVYKIIYVALIGVLLFSLVPLYYSGLDSIYSYGVIALVLGLGISLTLFISEIPRLQASKEQKSKSGNKKSTTRKVKA.

A compositionally biased stretch (basic residues) spans 1-12; that stretch reads MAGNKKQVKKNT. Disordered stretches follow at residues 1-76 and 119-274; these read MAGN…EKKS and KNKN…KEIK. The span at 26 to 39 shows a compositional bias: polar residues; that stretch reads DTSNLDTAVQTSAS. Over residues 129–141 the composition is skewed to low complexity; the sequence is TATDGTTTTTNIP. The span at 175–185 shows a compositional bias: basic and acidic residues; that stretch reads DETHSHKEEPK. 2 stretches are compositionally biased toward low complexity: residues 198 to 212 and 225 to 241; these read SKQQ…SSSS and PTPT…KSTP. Residues 256-274 are compositionally biased toward basic and acidic residues; sequence EQPKEKSSPAPVKKEKEIK. A run of 2 helical transmembrane segments spans residues 299–319 and 327–347; these read VVYK…LVPL and IYSY…TLFI. The disordered stretch occupies residues 355–375; the sequence is ASKEQKSKSGNKKSTTRKVKA. Residues 363–375 show a composition bias toward basic residues; that stretch reads SGNKKSTTRKVKA.

The protein localises to the membrane. This is an uncharacterized protein from Dictyostelium discoideum (Social amoeba).